We begin with the raw amino-acid sequence, 245 residues long: MSVHSKLYEGKAKILYTTDEPEVLLADFKDDATAFNAQKRGSIIGKGRINCSISSQLFQQLEASGIKTHFIDSPAPNQMRVKAVKIIPLEVVIRNIAAGSLSQQTGIELGTVLKQPLVEFYYKNDQLGDPLLTRDRLLLMELATAEQVEEITHLALQINDFLKNFWQNCGITLVDFKLEFGLDSQQQILLADEISPDTCRLWNTTEADPNRRVMDKDRFRRDLGNVEDAYQEVLQRVLTAVEIKN.

This sequence belongs to the SAICAR synthetase family.

The catalysed reaction is 5-amino-1-(5-phospho-D-ribosyl)imidazole-4-carboxylate + L-aspartate + ATP = (2S)-2-[5-amino-1-(5-phospho-beta-D-ribosyl)imidazole-4-carboxamido]succinate + ADP + phosphate + 2 H(+). The protein operates within purine metabolism; IMP biosynthesis via de novo pathway; 5-amino-1-(5-phospho-D-ribosyl)imidazole-4-carboxamide from 5-amino-1-(5-phospho-D-ribosyl)imidazole-4-carboxylate: step 1/2. In Nostoc sp. (strain PCC 7120 / SAG 25.82 / UTEX 2576), this protein is Phosphoribosylaminoimidazole-succinocarboxamide synthase.